The primary structure comprises 300 residues: uncharacterized protein (300 aa).

The signal sequence occupies residues M1 to G22.

The protein localises to the endoplasmic reticulum. This is an uncharacterized protein from Schizosaccharomyces pombe (strain 972 / ATCC 24843) (Fission yeast).